We begin with the raw amino-acid sequence, 215 residues long: LexA repressor (215 aa).

Positions 28–48 (RAEIAAELGFSSPNAAEEHLR) form a DNA-binding region, H-T-H motif. Active-site for autocatalytic cleavage activity residues include serine 133 and lysine 170.

Belongs to the peptidase S24 family. Homodimer.

It catalyses the reaction Hydrolysis of Ala-|-Gly bond in repressor LexA.. In terms of biological role, represses a number of genes involved in the response to DNA damage (SOS response), including recA and lexA. In the presence of single-stranded DNA, RecA interacts with LexA causing an autocatalytic cleavage which disrupts the DNA-binding part of LexA, leading to derepression of the SOS regulon and eventually DNA repair. In Burkholderia vietnamiensis (strain G4 / LMG 22486) (Burkholderia cepacia (strain R1808)), this protein is LexA repressor.